The following is a 271-amino-acid chain: Aquaporin-1 (271 aa).

Over 1–11 the chain is Cytoplasmic; sequence MASEFKKKLFW. Residues 12 to 29 traverse the membrane as a helical segment; it reads RAVVAEFLAMILFIFISI. Residues 30-48 lie on the Extracellular side of the membrane; sequence GSALGFHYPIKSNQTTGAV. Residue asparagine 42 is glycosylated (N-linked (GlcNAc...) asparagine). A helical transmembrane segment spans residues 49 to 67; that stretch reads QDNVKVSLAFGLSIATLAQ. Topologically, residues 68–70 are cytoplasmic; sequence SVG. The stretch at 71 to 84 is an intramembrane region; it reads HISGAHLNPAVTLG. The NPA 1 signature appears at 78 to 80; the sequence is NPA. Residues 85 to 92 lie on the Cytoplasmic side of the membrane; sequence LLLSCQIS. Residues 93-111 traverse the membrane as a helical segment; it reads VLRAIMYIIAQCVGAIVAT. The Extracellular portion of the chain corresponds to 112 to 135; that stretch reads AILSGITSSLPDNSLGLNALAPGV. A helical transmembrane segment spans residues 136–155; that stretch reads NSGQGLGIEIIGTLQLVLCV. Topologically, residues 156–165 are cytoplasmic; that stretch reads LATTDRRRRD. A helical membrane pass occupies residues 166–183; the sequence is LGGSGPLAIGFSVALGHL. The Extracellular portion of the chain corresponds to 184–188; that stretch reads LAIDY. Residues 189–201 lie within the membrane without spanning it; it reads TGCGINPARSFGS. The NPA 2 signature appears at 194–196; that stretch reads NPA. The Extracellular segment spans residues 202 to 208; that stretch reads SVITHNF. The helical transmembrane segment at 209 to 226 threads the bilayer; that stretch reads QDHWIFWVGPFIGAALAV. Over 227–271 the chain is Cytoplasmic; it reads LIYDFILAPRSSDLTDRVKVWTSGQVEEYDLDADDINSRVEMKPK. Serine 249 carries the phosphoserine modification. Tyrosine 255 carries the phosphotyrosine modification. A Phosphoserine modification is found at serine 264.

Belongs to the MIP/aquaporin (TC 1.A.8) family. In terms of assembly, homotetramer; each monomer provides an independent water pore. Component of the ankyrin-1 complex in the erythrocyte, composed of ANK1, RHCE, RHAG, SLC4A1, EPB42, GYPA, GYPB and AQP1. Interacts with EPHB2; involved in endolymph production in the inner ear. Identified in a complex with STOM. Interacts (via the N-terminal) with ANK1 (via ANK 1-5 repeats). Interacts (via the C-terminal) with EPB42.

Its subcellular location is the cell membrane. It carries out the reaction H2O(in) = H2O(out). The catalysed reaction is nitric oxide(out) = nitric oxide(in). It catalyses the reaction CO2(out) = CO2(in). The enzyme catalyses glycerol(in) = glycerol(out). It carries out the reaction H2O2(out) = H2O2(in). The catalysed reaction is K(+)(in) = K(+)(out). It catalyses the reaction Na(+)(in) = Na(+)(out). In terms of biological role, forms a water channel that facilitates the transport of water across cell membranes, playing a crucial role in water homeostasis in various tissues. Could also be permeable to small solutes including hydrogen peroxide, glycerol and gases such as amonnia (NH3), nitric oxide (NO) and carbon dioxide (CO2). Recruited to the ankyrin-1 complex, a multiprotein complex of the erythrocyte membrane, it could be part of a CO2 metabolon, linking facilitated diffusion of CO2 across the membrane, anion exchange of Cl(-)/HCO3(-) and interconversion of dissolved CO2 and carbonic acid in the cytosol. In vitro, it shows non-selective gated cation channel activity and may be permeable to cations like K(+) and Na(+) in vivo. The sequence is that of Aquaporin-1 from Bos taurus (Bovine).